Reading from the N-terminus, the 249-residue chain is Uridylate kinase (249 aa).

23–26 (KISG) is a binding site for ATP. The segment at 31–36 (GDQGFG) is involved in allosteric activation by GTP. UMP is bound at residue Gly65. The ATP site is built by Gly66 and Arg70. UMP-binding positions include Asp85 and 146 to 153 (TGNPYFTT). Positions 173, 179, and 182 each coordinate ATP.

Belongs to the UMP kinase family. As to quaternary structure, homohexamer.

It is found in the cytoplasm. It carries out the reaction UMP + ATP = UDP + ADP. Its pathway is pyrimidine metabolism; CTP biosynthesis via de novo pathway; UDP from UMP (UMPK route): step 1/1. Allosterically activated by GTP. Inhibited by UTP. Functionally, catalyzes the reversible phosphorylation of UMP to UDP. This Jannaschia sp. (strain CCS1) protein is Uridylate kinase.